Reading from the N-terminus, the 218-residue chain is Structural protein V19 (218 aa).

The protein resides in the virion. This chain is Structural protein V19, found in Sputnik virophage.